Here is a 313-residue protein sequence, read N- to C-terminus: Short-chain dehydrogenase/reductase family 9C member 7 (313 aa).

29 to 53 (FITGCDSGFGNLLARQLVDRGMRVL) is a binding site for NADP(+). A substrate-binding site is contributed by serine 160. Tyrosine 172 functions as the Proton acceptor in the catalytic mechanism. At serine 185 the chain carries Phosphoserine.

Belongs to the short-chain dehydrogenases/reductases (SDR) family.

Its subcellular location is the cytoplasm. It catalyses the reaction a N-[omega-(9R,10R)-epoxy-(13R)-hydroxy-(11E)-octadecenoyloxy]acyl-beta-D-glucosyl-(1&lt;-&gt;1)-sphing-4E-enine + NAD(+) = a N-[omega-(9R,10R)-epoxy-13-oxo-(11E)-octadecenoyloxy]acyl-beta-D-glucosyl-(1&lt;-&gt;1)-sphing-4E-enine + NADH + H(+). The catalysed reaction is a N-[omega-(9R,10R)-epoxy-(13R)-hydroxy-(11E)-octadecenoyloxy]-acylsphing-4E-enine + NAD(+) = a N-[omega-(9R,10R)-epoxy-13-oxo-(11E)-octadecenoyloxy]-acylsphing-4E-enine + NADH + H(+). Plays a crucial role in the formation of the epidermal permeability barrier. Catalyzes the NAD+-dependent dehydrogenation of the linoleate 9,10-trans-epoxy-11E-13-alcohol esterified in omega-O-acylceramides (such as in N-[omega-(9R,10R)-epoxy-(13R)-hydroxy-(11E)-octadecenoyloxy]-acylsphing-4E-enine) to the corresponding 13-ketone, the reactive moiety required for binding of epidermal ceramides to proteins. Displays weak conversion of all-trans-retinal to all-trans-retinol in the presence of NADH. Has apparently no steroid dehydrogenase activity. This chain is Short-chain dehydrogenase/reductase family 9C member 7 (SDR9C7), found in Bos taurus (Bovine).